The primary structure comprises 426 residues: Serine--tRNA ligase (426 aa).

231–233 (TSE) provides a ligand contact to L-serine. 262 to 264 (RSE) provides a ligand contact to ATP. Glu285 serves as a coordination point for L-serine. 349–352 (EISS) provides a ligand contact to ATP. Position 385 (Ser385) interacts with L-serine.

This sequence belongs to the class-II aminoacyl-tRNA synthetase family. Type-1 seryl-tRNA synthetase subfamily. Homodimer. The tRNA molecule binds across the dimer.

The protein resides in the cytoplasm. It carries out the reaction tRNA(Ser) + L-serine + ATP = L-seryl-tRNA(Ser) + AMP + diphosphate + H(+). The enzyme catalyses tRNA(Sec) + L-serine + ATP = L-seryl-tRNA(Sec) + AMP + diphosphate + H(+). Its pathway is aminoacyl-tRNA biosynthesis; selenocysteinyl-tRNA(Sec) biosynthesis; L-seryl-tRNA(Sec) from L-serine and tRNA(Sec): step 1/1. Catalyzes the attachment of serine to tRNA(Ser). Is also able to aminoacylate tRNA(Sec) with serine, to form the misacylated tRNA L-seryl-tRNA(Sec), which will be further converted into selenocysteinyl-tRNA(Sec). In Legionella pneumophila subsp. pneumophila (strain Philadelphia 1 / ATCC 33152 / DSM 7513), this protein is Serine--tRNA ligase.